A 324-amino-acid chain; its full sequence is Elongation factor Ts, mitochondrial (324 aa).

The transit peptide at 1 to 44 directs the protein to the mitochondrion; the sequence is MSLLRSLRFFPVACTGRSARAVLLQPSQPWHTLHAGPSLSSSAS. N6-succinyllysine is present on residues Lys75 and Lys132. Ser269 carries the phosphoserine modification.

Belongs to the EF-Ts family.

The protein localises to the mitochondrion. In terms of biological role, associates with the EF-Tu.GDP complex and induces the exchange of GDP to GTP. It remains bound to the aminoacyl-tRNA.EF-Tu.GTP complex up to the GTP hydrolysis stage on the ribosome. The polypeptide is Elongation factor Ts, mitochondrial (Tsfm) (Rattus norvegicus (Rat)).